Reading from the N-terminus, the 351-residue chain is F-box protein At1g47810 (351 aa).

The F-box domain occupies 8-54 (LQSLDPIPVDVLFEIFLNLPAKFLARFVCVSKLWAKIIRNQDFIRSF).

This chain is F-box protein At1g47810, found in Arabidopsis thaliana (Mouse-ear cress).